The following is a 154-amino-acid chain: Myoglobin (154 aa).

The Globin domain maps to 2-148 (GLSDDEWNHV…FRNDMASKYK (147 aa)). His-65 provides a ligand contact to nitrite. His-65 lines the O2 pocket. Position 94 (His-94) interacts with heme b.

It belongs to the globin family. In terms of assembly, monomeric.

It localises to the cytoplasm. The protein localises to the sarcoplasm. It catalyses the reaction Fe(III)-heme b-[protein] + nitric oxide + H2O = Fe(II)-heme b-[protein] + nitrite + 2 H(+). The enzyme catalyses H2O2 + AH2 = A + 2 H2O. Its function is as follows. Monomeric heme protein which primary function is to store oxygen and facilitate its diffusion within muscle tissues. Reversibly binds oxygen through a pentacoordinated heme iron and enables its timely and efficient release as needed during periods of heightened demand. Depending on the oxidative conditions of tissues and cells, and in addition to its ability to bind oxygen, it also has a nitrite reductase activity whereby it regulates the production of bioactive nitric oxide. Under stress conditions, like hypoxia and anoxia, it also protects cells against reactive oxygen species thanks to its pseudoperoxidase activity. The polypeptide is Myoglobin (MB) (Caretta caretta (Loggerhead sea turtle)).